The following is a 344-amino-acid chain: Ferrochelatase (344 aa).

Fe cation-binding residues include His214 and Glu295.

The protein belongs to the ferrochelatase family.

Its subcellular location is the cytoplasm. It catalyses the reaction heme b + 2 H(+) = protoporphyrin IX + Fe(2+). The protein operates within porphyrin-containing compound metabolism; protoheme biosynthesis; protoheme from protoporphyrin-IX: step 1/1. In terms of biological role, catalyzes the ferrous insertion into protoporphyrin IX. The chain is Ferrochelatase from Agrobacterium fabrum (strain C58 / ATCC 33970) (Agrobacterium tumefaciens (strain C58)).